Consider the following 168-residue polypeptide: Bifunctional protein PyrR (168 aa).

Residues 90–102 (LVLIDDVLMSGRT) carry the PRPP-binding motif.

Belongs to the purine/pyrimidine phosphoribosyltransferase family. PyrR subfamily.

It catalyses the reaction UMP + diphosphate = 5-phospho-alpha-D-ribose 1-diphosphate + uracil. In terms of biological role, regulates the transcription of the pyrimidine nucleotide (pyr) operon in response to exogenous pyrimidines. Also displays a weak uracil phosphoribosyltransferase activity which is not physiologically significant. The polypeptide is Bifunctional protein PyrR (Pseudomonas fluorescens (strain ATCC BAA-477 / NRRL B-23932 / Pf-5)).